A 474-amino-acid chain; its full sequence is Pyoverdine export outer membrane protein OpmQ (474 aa).

An N-terminal signal peptide occupies residues 1 to 17 (MSMKNLSLISACLLLGA). Cysteine 18 is lipidated: N-palmitoyl cysteine. Residue cysteine 18 is the site of S-diacylglycerol cysteine attachment.

Belongs to the outer membrane factor (OMF) (TC 1.B.17) family. In terms of assembly, part of the tripartite efflux system PvdRT-OpmQ, which is composed of an inner membrane component with both ATPase and permease domains, PvdT, a periplasmic membrane fusion protein, PvdR, and an outer membrane component, OpmQ.

It localises to the cell outer membrane. Part of the tripartite efflux system PvdRT-OpmQ required for the secretion into the extracellular milieu of the siderophore pyoverdine (PVD), which is involved in iron acquisition. The system is responsible for export of newly synthesized PVD after the final steps of biosynthesis have taken place in the periplasm. It is also responsible for recycling of PVD after internalization of ferri-PVD into the periplasm by the outer-membrane receptor FpvA and release of iron from PVD, thus making PVD available for new cycles of iron uptake. In addition, can expel unwanted metals complexed with PVD from the periplasm into the extracellular medium. The sequence is that of Pyoverdine export outer membrane protein OpmQ from Pseudomonas aeruginosa (strain ATCC 15692 / DSM 22644 / CIP 104116 / JCM 14847 / LMG 12228 / 1C / PRS 101 / PAO1).